The chain runs to 754 residues: MAAGVLPQNEQPYSTLVNNSECVANMKGNLERPTPKYTKVGERLRHVIPGHMACSMACGGRACKYENPARWSEQEQAIKGVYSSWVTDNILAMARPSSELLEKYHIIDQFLSHGIKTIINLQRPGEHASCGNPLEQESGFTYLPEAFMEAGIYFYNFGWKDYGVASLTTILDMVKVMTFALQEGKVAIHCHAGLGRTGVLIACYLVFATRMTADQAIIFVRAKRPNSIQTRGQLLCVREFTQFLTPLRNIFSCCDPKAHAVTLPQYLIRQRHLLHGYEARLLKHVPKIIHLVCKLLLDLAENRPVMMKDVSEGPGLSAEIEKTMSEMVTMQLDKELLRHDSDVSNPPNPTAVAADFDNRGMIFSNEQQFDPLWKRRNVECLQPLTHLKRRLSYSDSDLKRAENLLEQGETPQTVPAQILVGHKPRQQKLISHCYIPQSPEPDLHKEALVRSTLSFWSQSKFGGLEGLKDNGSPIFHGRIIPKEAQQSGAFSADVSGSHSPGEPVSPSFANVHKDPNPAHQQVSHCQCKTHGVGSPGSVRQNSRTPRSPLDCGSSPKAQFLVEHETQDSKDLSEAASHSALQSELSAEARRILAAKALANLNESVEKEELKRKVEMWQKELNSRDGAWERICGERDPFILCSLMWSWVEQLKEPVITKEDVDMLVDRRADAAEALFLLEKGQHQTILCVLHCIVNLQTIPVDVEEAFLAHAIKAFTKVNFDSENGPTVYNTLKKIFKHTLEEKRKMTKDGPKPGL.

Residues 82–253 form the Tyrosine-protein phosphatase domain; sequence YSSWVTDNIL…LTPLRNIFSC (172 aa). Residue Cys190 is the Phosphocysteine intermediate of the active site. Ser392 and Ser394 each carry phosphoserine. The span at 487–498 shows a compositional bias: polar residues; it reads SGAFSADVSGSH. A disordered region spans residues 487–554; that stretch reads SGAFSADVSG…PRSPLDCGSS (68 aa). A Phosphoserine modification is found at Ser547.

This sequence belongs to the protein-tyrosine phosphatase family. Non-receptor class PTPDC1 subfamily.

Functionally, may play roles in cilia formation and/or maintenance. In Homo sapiens (Human), this protein is Protein tyrosine phosphatase domain-containing protein 1 (PTPDC1).